We begin with the raw amino-acid sequence, 319 residues long: Acetyl-coenzyme A carboxylase carboxyl transferase subunit alpha (319 aa).

A CoA carboxyltransferase C-terminal domain is found at lysine 39–glycine 293.

This sequence belongs to the AccA family. Acetyl-CoA carboxylase is a heterohexamer composed of biotin carboxyl carrier protein (AccB), biotin carboxylase (AccC) and two subunits each of ACCase subunit alpha (AccA) and ACCase subunit beta (AccD).

It localises to the cytoplasm. It catalyses the reaction N(6)-carboxybiotinyl-L-lysyl-[protein] + acetyl-CoA = N(6)-biotinyl-L-lysyl-[protein] + malonyl-CoA. The protein operates within lipid metabolism; malonyl-CoA biosynthesis; malonyl-CoA from acetyl-CoA: step 1/1. Its function is as follows. Component of the acetyl coenzyme A carboxylase (ACC) complex. First, biotin carboxylase catalyzes the carboxylation of biotin on its carrier protein (BCCP) and then the CO(2) group is transferred by the carboxyltransferase to acetyl-CoA to form malonyl-CoA. In Parvibaculum lavamentivorans (strain DS-1 / DSM 13023 / NCIMB 13966), this protein is Acetyl-coenzyme A carboxylase carboxyl transferase subunit alpha.